Consider the following 187-residue polypeptide: Threonylcarbamoyl-AMP synthase (187 aa).

A YrdC-like domain is found at 4-187; it reads TPDLDAAVAT…DARTGQILRD (184 aa).

This sequence belongs to the SUA5 family. TsaC subfamily.

It is found in the cytoplasm. It carries out the reaction L-threonine + hydrogencarbonate + ATP = L-threonylcarbamoyladenylate + diphosphate + H2O. Its function is as follows. Required for the formation of a threonylcarbamoyl group on adenosine at position 37 (t(6)A37) in tRNAs that read codons beginning with adenine. Catalyzes the conversion of L-threonine, HCO(3)(-)/CO(2) and ATP to give threonylcarbamoyl-AMP (TC-AMP) as the acyladenylate intermediate, with the release of diphosphate. This is Threonylcarbamoyl-AMP synthase from Xanthomonas campestris pv. campestris (strain 8004).